Reading from the N-terminus, the 258-residue chain is Glutathione S-transferase DHAR3, chloroplastic (258 aa).

Residues 1 to 42 (MISLRFQPSTTAGVLSASVSRAGFIKRCGSTKPGRVGRFVTM) constitute a chloroplast transit peptide. Cysteine 52 is subject to S-glutathionyl cysteine. Glutathione contacts are provided by lysine 54 and aspartate 65. L-ascorbate is bound by residues lysine 54 and aspartate 65. The region spanning 56–129 (SITTPNKLGD…DVITQALEEK (74 aa)) is the GST N-terminal domain. Residue cysteine 66 is the Nucleophile of the active site. Cysteine 66 and cysteine 69 are disulfide-bonded. The short motif at 66–71 (CPFCQK) is the Glutathione-binding element. Positions 93, 106, 119, 205, and 252 each coordinate glutathione. The 129-residue stretch at 130 to 258 (YPEPPLATPP…IAGWRPKVMG (129 aa)) folds into the GST C-terminal domain. Lysine 255 is an L-ascorbate binding site.

Belongs to the GST superfamily. DHAR family. In terms of assembly, monomer. Interacts with TRX3. Post-translationally, partial S-glutathionylation and intramolecular disulfide bond formation between Cys-66 and Cys-69 in the presence of oxidized glutathione (GSSG). Could be reduced by TRX-dependent process.

The protein resides in the plastid. It localises to the chloroplast stroma. It catalyses the reaction RX + glutathione = an S-substituted glutathione + a halide anion + H(+). It carries out the reaction L-dehydroascorbate + 2 glutathione = glutathione disulfide + L-ascorbate. In terms of biological role, displays a dual function. As a soluble protein, exhibits glutathione-dependent thiol transferase and dehydroascorbate (DHA) reductase activities. Key component of the ascorbate recycling system. Involved in the redox homeostasis, especially in scavenging of ROS under oxidative stresses. The polypeptide is Glutathione S-transferase DHAR3, chloroplastic (DHAR3) (Arabidopsis thaliana (Mouse-ear cress)).